We begin with the raw amino-acid sequence, 243 residues long: MFAVSAMRRRRRRILAECRTREAVYKERTLELLSQGVETDDPEFIEVFTSARNAHSDYKAQLRSNMRLEATDRKTKIIQRHIDEQLDRRLILDINRKLLNPKLQLQLDQTEEAILEKEDILAQTIDDITLNDSITNTDELDEESEALLTKWILNQKTKKRPTVAKTAIAPTAHGLQTKVSRNVFITGKDDLVQPTDLGQPSTHEVITCTSRERIIHPDGIHTEIYTTEDVSPTILDDVSDSCV.

It belongs to the alphaherpesvirinae HHV-1 UL14 protein family. Post-translationally, phosphorylated.

The protein localises to the virion tegument. The protein resides in the host cytoplasm. It localises to the host nucleus. Its function is as follows. Contributes to the nuclear transport of the viral transcriptional activator VP16 homolog during the early phase of infection. Therefore, participates indirectly in the regulation of the immediate-early gene expression. Additionally, seems to be important for efficient nuclear targeting of capsids. This chain is Tegument protein UL14 homolog (MDV026), found in Gallid herpesvirus 2 (strain Chicken/Md5/ATCC VR-987) (GaHV-2).